The chain runs to 85 residues: RNA-binding protein Hfq (85 aa).

The Sm domain occupies 9–68 (DPFLNALRRERIPVSIYLVNGIKLQGQIESFDQFVILLKNTVNQMVYKHAISTVVPARPV). Positions 66-85 (RPVNHHHASDRPATLEKTEE) are disordered. Residues 72-85 (HASDRPATLEKTEE) are compositionally biased toward basic and acidic residues.

It belongs to the Hfq family. Homohexamer.

Its function is as follows. RNA chaperone that binds small regulatory RNA (sRNAs) and mRNAs to facilitate mRNA translational regulation in response to envelope stress, environmental stress and changes in metabolite concentrations. Also binds with high specificity to tRNAs. This is RNA-binding protein Hfq from Photobacterium profundum (strain SS9).